The chain runs to 615 residues: Dihydroxy-acid dehydratase (615 aa).

D81 contributes to the Mg(2+) binding site. C122 is a [2Fe-2S] cluster binding site. Residues D123 and K124 each contribute to the Mg(2+) site. N6-carboxylysine is present on K124. A [2Fe-2S] cluster-binding site is contributed by C195. Mg(2+) is bound at residue E491. The Proton acceptor role is filled by S517.

This sequence belongs to the IlvD/Edd family. In terms of assembly, homodimer. [2Fe-2S] cluster is required as a cofactor. Mg(2+) serves as cofactor.

It carries out the reaction (2R)-2,3-dihydroxy-3-methylbutanoate = 3-methyl-2-oxobutanoate + H2O. The enzyme catalyses (2R,3R)-2,3-dihydroxy-3-methylpentanoate = (S)-3-methyl-2-oxopentanoate + H2O. It participates in amino-acid biosynthesis; L-isoleucine biosynthesis; L-isoleucine from 2-oxobutanoate: step 3/4. Its pathway is amino-acid biosynthesis; L-valine biosynthesis; L-valine from pyruvate: step 3/4. Functions in the biosynthesis of branched-chain amino acids. Catalyzes the dehydration of (2R,3R)-2,3-dihydroxy-3-methylpentanoate (2,3-dihydroxy-3-methylvalerate) into 2-oxo-3-methylpentanoate (2-oxo-3-methylvalerate) and of (2R)-2,3-dihydroxy-3-methylbutanoate (2,3-dihydroxyisovalerate) into 2-oxo-3-methylbutanoate (2-oxoisovalerate), the penultimate precursor to L-isoleucine and L-valine, respectively. This chain is Dihydroxy-acid dehydratase, found in Pseudoalteromonas atlantica (strain T6c / ATCC BAA-1087).